Consider the following 136-residue polypeptide: Large ribosomal subunit protein uL16 (136 aa).

It belongs to the universal ribosomal protein uL16 family. As to quaternary structure, part of the 50S ribosomal subunit.

In terms of biological role, binds 23S rRNA and is also seen to make contacts with the A and possibly P site tRNAs. This chain is Large ribosomal subunit protein uL16, found in Shewanella sediminis (strain HAW-EB3).